A 220-amino-acid polypeptide reads, in one-letter code: Regulatory protein VanRB (220 aa).

The Response regulatory domain maps to Arg4 to Leu117. Position 53 is a 4-aspartylphosphate (Asp53). The segment at residues Ala124–Glu218 is a DNA-binding region (ompR/PhoB-type).

In terms of processing, may be phosphorylated by VanSB. May also be dephosphorylated by VanSB.

It is found in the cytoplasm. Member of the two-component regulatory system VanSB/VanRB. Activates the transcription of vanSB, vanYB and vanW in response to vancomycin which results in vancomycin resistance. The sequence is that of Regulatory protein VanRB (vanRB) from Enterococcus faecalis (strain ATCC 700802 / V583).